Here is a 495-residue protein sequence, read N- to C-terminus: Bifunctional protein GlmU (495 aa).

Positions 1 to 241 (MPQQTAVVVL…AAKVTGVNDR (241 aa)) are pyrophosphorylase. Residues 10–13 (LAAG), Lys-24, Gln-81, and 86–87 (GT) each bind UDP-N-acetyl-alpha-D-glucosamine. Mg(2+) is bound at residue Asp-112. Gly-151, Glu-166, Asn-181, and Asn-239 together coordinate UDP-N-acetyl-alpha-D-glucosamine. Asn-239 contacts Mg(2+). The linker stretch occupies residues 242–262 (VQLSIATRTMNRYILERHMRA). Residues 263-495 (GVTIIDPAST…QATEQKDGEQ (233 aa)) form an N-acetyltransferase region. Positions 344 and 362 each coordinate UDP-N-acetyl-alpha-D-glucosamine. The active-site Proton acceptor is the His-374. Residues Tyr-377 and Asn-388 each contribute to the UDP-N-acetyl-alpha-D-glucosamine site. Residues Ala-391, 397 to 398 (NY), Ser-416, and Ala-434 contribute to the acetyl-CoA site. A disordered region spans residues 467-495 (GTAAATAAAQALAADEKSSQATEQKDGEQ). A compositionally biased stretch (low complexity) spans 468–479 (TAAATAAAQALA). Residues 480 to 495 (ADEKSSQATEQKDGEQ) are compositionally biased toward basic and acidic residues.

This sequence in the N-terminal section; belongs to the N-acetylglucosamine-1-phosphate uridyltransferase family. The protein in the C-terminal section; belongs to the transferase hexapeptide repeat family. As to quaternary structure, homotrimer. The cofactor is Mg(2+).

The protein resides in the cytoplasm. The catalysed reaction is alpha-D-glucosamine 1-phosphate + acetyl-CoA = N-acetyl-alpha-D-glucosamine 1-phosphate + CoA + H(+). The enzyme catalyses N-acetyl-alpha-D-glucosamine 1-phosphate + UTP + H(+) = UDP-N-acetyl-alpha-D-glucosamine + diphosphate. It functions in the pathway nucleotide-sugar biosynthesis; UDP-N-acetyl-alpha-D-glucosamine biosynthesis; N-acetyl-alpha-D-glucosamine 1-phosphate from alpha-D-glucosamine 6-phosphate (route II): step 2/2. It participates in nucleotide-sugar biosynthesis; UDP-N-acetyl-alpha-D-glucosamine biosynthesis; UDP-N-acetyl-alpha-D-glucosamine from N-acetyl-alpha-D-glucosamine 1-phosphate: step 1/1. Its pathway is bacterial outer membrane biogenesis; LPS lipid A biosynthesis. Functionally, catalyzes the last two sequential reactions in the de novo biosynthetic pathway for UDP-N-acetylglucosamine (UDP-GlcNAc). The C-terminal domain catalyzes the transfer of acetyl group from acetyl coenzyme A to glucosamine-1-phosphate (GlcN-1-P) to produce N-acetylglucosamine-1-phosphate (GlcNAc-1-P), which is converted into UDP-GlcNAc by the transfer of uridine 5-monophosphate (from uridine 5-triphosphate), a reaction catalyzed by the N-terminal domain. This chain is Bifunctional protein GlmU, found in Nocardia farcinica (strain IFM 10152).